The primary structure comprises 198 residues: Phosphoheptose isomerase (198 aa).

The 163-residue stretch at 36 to 198 (MARALGADRK…DRTLFGGPGG (163 aa)) folds into the SIS domain. 51-53 (NGG) contributes to the substrate binding site. 2 residues coordinate Zn(2+): histidine 60 and glutamate 64. Residues glutamate 64, 93-94 (ND), 119-121 (STS), serine 124, and glutamine 174 each bind substrate. Zn(2+) is bound by residues glutamine 174 and histidine 182.

This sequence belongs to the SIS family. GmhA subfamily. In terms of assembly, homotetramer. The cofactor is Zn(2+).

The protein localises to the cytoplasm. The catalysed reaction is 2 D-sedoheptulose 7-phosphate = D-glycero-alpha-D-manno-heptose 7-phosphate + D-glycero-beta-D-manno-heptose 7-phosphate. The protein operates within carbohydrate biosynthesis; D-glycero-D-manno-heptose 7-phosphate biosynthesis; D-glycero-alpha-D-manno-heptose 7-phosphate and D-glycero-beta-D-manno-heptose 7-phosphate from sedoheptulose 7-phosphate: step 1/1. Its function is as follows. Catalyzes the isomerization of sedoheptulose 7-phosphate in D-glycero-D-manno-heptose 7-phosphate. In Halorhodospira halophila (strain DSM 244 / SL1) (Ectothiorhodospira halophila (strain DSM 244 / SL1)), this protein is Phosphoheptose isomerase.